The following is a 287-amino-acid chain: uncharacterized protein (287 aa).

GTP contacts are provided by residues 43–50 (GKTGAGKS), 90–93 (DLPG), and 156–159 (DKAE). The region spanning 48–140 (GKSSLCNALF…TDEHFYRQVI (93 aa)) is the G domain.

The protein to E.coli YkfA and YeeP.

This is an uncharacterized protein from Escherichia coli (strain K12).